An 857-amino-acid chain; its full sequence is Linoleate 9S-lipoxygenase 6 (857 aa).

The 131-residue stretch at 26 to 156 folds into the PLAT domain; that stretch reads NALDFTDLAG…RYKSDRIFFA (131 aa). Residues 159 to 857 enclose the Lipoxygenase domain; that stretch reads PYLPSETPEL…GKGIPNSVSI (699 aa). The disordered stretch occupies residues 205-243; the sequence is NPDQGEQNVRTTLGGSADYPYPRRGRTGRPPTRTDPKSE. Polar residues predominate over residues 208-218; it reads QGEQNVRTTLG. Positions 518, 523, 709, 713, and 857 each coordinate Fe cation.

The protein belongs to the lipoxygenase family. In terms of assembly, monomer. Fe cation is required as a cofactor. In terms of tissue distribution, expressed in tubers and roots. Detected in leaves, petioles and stems.

The protein resides in the cytoplasm. The enzyme catalyses (9Z,12Z)-octadecadienoate + O2 = (9S)-hydroperoxy-(10E,12Z)-octadecadienoate. It participates in lipid metabolism; oxylipin biosynthesis. Functionally, plant lipoxygenases may be involved in a number of diverse aspects of plant physiology including growth and development, pest resistance, and senescence or responses to wounding. Catalyzes the hydroperoxidation of lipids containing a cis,cis-1,4-pentadiene structure. Linoleic and linolenic acids are the preferred substrates, but is also active with arachidonic acid. The products are almost exclusively the S enantiomers. The protein is Linoleate 9S-lipoxygenase 6 (LOX1.6) of Solanum tuberosum (Potato).